The following is a 256-amino-acid chain: tRNA (guanine-N(7)-)-methyltransferase (256 aa).

The tract at residues 1–43 (MDVDPVNSEMELDNKPTCETVPGLPQKKHYRQRAHSNPHSDHD) is disordered. Over residues 26–36 (QKKHYRQRAHS) the composition is skewed to basic residues. S-adenosyl-L-methionine is bound by residues Gly-74, 97-98 (EI), 132-133 (NA), and Leu-152. The active site involves Asp-155. 230 to 232 (TEE) contributes to the S-adenosyl-L-methionine binding site.

Belongs to the class I-like SAM-binding methyltransferase superfamily. TrmB family.

Its subcellular location is the nucleus. It catalyses the reaction guanosine(46) in tRNA + S-adenosyl-L-methionine = N(7)-methylguanosine(46) in tRNA + S-adenosyl-L-homocysteine. It participates in tRNA modification; N(7)-methylguanine-tRNA biosynthesis. Catalyzes the formation of N(7)-methylguanine at position 46 (m7G46) in tRNA. The sequence is that of tRNA (guanine-N(7)-)-methyltransferase from Caenorhabditis briggsae.